The chain runs to 479 residues: tRNA modification GTPase MnmE (479 aa).

Arg-30, Glu-91, and Lys-130 together coordinate (6S)-5-formyl-5,6,7,8-tetrahydrofolate. Positions 226–402 (GFRIVLTGLP…VLKDLVKEFA (177 aa)) constitute a TrmE-type G domain. Residue Asn-236 participates in K(+) binding. GTP-binding positions include 236–241 (NVGKSS), 255–261 (TDIPGTT), and 280–283 (DTAG). Residue Ser-240 participates in Mg(2+) binding. 3 residues coordinate K(+): Thr-255, Ile-257, and Thr-260. Residue Thr-261 coordinates Mg(2+). Lys-479 serves as a coordination point for (6S)-5-formyl-5,6,7,8-tetrahydrofolate.

The protein belongs to the TRAFAC class TrmE-Era-EngA-EngB-Septin-like GTPase superfamily. TrmE GTPase family. As to quaternary structure, homodimer. Heterotetramer of two MnmE and two MnmG subunits. K(+) is required as a cofactor.

It localises to the cytoplasm. Exhibits a very high intrinsic GTPase hydrolysis rate. Involved in the addition of a carboxymethylaminomethyl (cmnm) group at the wobble position (U34) of certain tRNAs, forming tRNA-cmnm(5)s(2)U34. This chain is tRNA modification GTPase MnmE, found in Bdellovibrio bacteriovorus (strain ATCC 15356 / DSM 50701 / NCIMB 9529 / HD100).